Here is a 283-residue protein sequence, read N- to C-terminus: Pantothenate synthetase (283 aa).

30 to 37 (MGYLHEGH) is an ATP binding site. H37 functions as the Proton donor in the catalytic mechanism. Q61 is a (R)-pantoate binding site. A beta-alanine-binding site is contributed by Q61. Residue 147 to 150 (GQKD) participates in ATP binding. Residue Q153 participates in (R)-pantoate binding. Residues V176 and 184–187 (MSSR) each bind ATP.

It belongs to the pantothenate synthetase family. Homodimer.

The protein localises to the cytoplasm. It catalyses the reaction (R)-pantoate + beta-alanine + ATP = (R)-pantothenate + AMP + diphosphate + H(+). The protein operates within cofactor biosynthesis; (R)-pantothenate biosynthesis; (R)-pantothenate from (R)-pantoate and beta-alanine: step 1/1. In terms of biological role, catalyzes the condensation of pantoate with beta-alanine in an ATP-dependent reaction via a pantoyl-adenylate intermediate. The protein is Pantothenate synthetase of Thermoanaerobacter pseudethanolicus (strain ATCC 33223 / 39E) (Clostridium thermohydrosulfuricum).